The following is a 342-amino-acid chain: Delta(6)-protoilludene synthase 8 (342 aa).

Aspartate 81 provides a ligand contact to Mg(2+). Residues arginine 93 to aspartate 97 carry the DDXXD motif motif. Residues asparagine 217, serine 221, and glutamate 225 each contribute to the Mg(2+) site. The NSE/DTE motif motif lies at asparagine 217 to glutamate 225. (2E,6E)-farnesyl diphosphate is bound by residues arginine 305 and tyrosine 306.

It belongs to the terpene synthase family. Mg(2+) serves as cofactor.

The catalysed reaction is (2E,6E)-farnesyl diphosphate = Delta(6)-protoilludene + diphosphate. Terpene cyclase that catalyzes the cyclization of farnesyl diphosphate (FPP) to delta(6)-protoilludene. This is Delta(6)-protoilludene synthase 8 from Postia placenta (strain ATCC 44394 / Madison 698-R) (Brown rot fungus).